The primary structure comprises 156 residues: Ribosomal RNA large subunit methyltransferase H (156 aa).

S-adenosyl-L-methionine-binding positions include Leu73, Gly104, and 123–128; that span reads LSKLTL.

The protein belongs to the RNA methyltransferase RlmH family. Homodimer.

It localises to the cytoplasm. It carries out the reaction pseudouridine(1915) in 23S rRNA + S-adenosyl-L-methionine = N(3)-methylpseudouridine(1915) in 23S rRNA + S-adenosyl-L-homocysteine + H(+). In terms of biological role, specifically methylates the pseudouridine at position 1915 (m3Psi1915) in 23S rRNA. The protein is Ribosomal RNA large subunit methyltransferase H of Hydrogenovibrio crunogenus (strain DSM 25203 / XCL-2) (Thiomicrospira crunogena).